A 306-amino-acid polypeptide reads, in one-letter code: Protoheme IX farnesyltransferase (306 aa).

9 consecutive transmembrane segments (helical) span residues 32–52 (VVALLVLTALVGMSLSVPGAL), 58–78 (IPAMLGIGLLSSAAAAINHIV), 103–123 (NAIVFATSIALLGFIILYALV), 126–146 (LTAFLTLAGLVGYSFVYTMYL), 153–173 (NITIGGLAGAIPPLLGWTAMT), 180–200 (ALLLVLIIFTWTPPHFWALAI), 227–247 (ILLYTVLLFVVCLLPYLVGMS), 249–269 (WLYLIGACSLNLIFFGYAWQL), and 278–298 (AMATFKFSIIHLMLLFIILLL).

It belongs to the UbiA prenyltransferase family. Protoheme IX farnesyltransferase subfamily.

It is found in the cell inner membrane. It catalyses the reaction heme b + (2E,6E)-farnesyl diphosphate + H2O = Fe(II)-heme o + diphosphate. Its pathway is porphyrin-containing compound metabolism; heme O biosynthesis; heme O from protoheme: step 1/1. Converts heme B (protoheme IX) to heme O by substitution of the vinyl group on carbon 2 of heme B porphyrin ring with a hydroxyethyl farnesyl side group. The sequence is that of Protoheme IX farnesyltransferase from Colwellia psychrerythraea (strain 34H / ATCC BAA-681) (Vibrio psychroerythus).